The primary structure comprises 156 residues: Cytochrome c-type biogenesis protein CcmE 2 (156 aa).

Over Met-1–Arg-8 the chain is Cytoplasmic. Residues Leu-9–Ala-29 form a helical; Signal-anchor for type II membrane protein membrane-spanning segment. The Periplasmic segment spans residues Leu-30–Gln-156. Positions 123 and 127 each coordinate heme. Residues Met-136–Gln-156 are disordered.

Belongs to the CcmE/CycJ family.

The protein localises to the cell inner membrane. Its function is as follows. Heme chaperone required for the biogenesis of c-type cytochromes. Transiently binds heme delivered by CcmC and transfers the heme to apo-cytochromes in a process facilitated by CcmF and CcmH. In Xanthomonas axonopodis pv. citri (strain 306), this protein is Cytochrome c-type biogenesis protein CcmE 2.